We begin with the raw amino-acid sequence, 266 residues long: Energy-coupling factor transporter transmembrane protein EcfT (266 aa).

The next 7 helical transmembrane spans lie at 26–46 (VIAT…RSVT), 47–67 (LAGL…HYIL), 69–89 (GIKP…LSTP), 116–136 (LIWL…IALT), 151–171 (LPVH…PTLI), 192–212 (SLVA…LSAF), and 246–266 (YAVT…KKAL).

Belongs to the energy-coupling factor EcfT family. As to quaternary structure, forms a stable energy-coupling factor (ECF) transporter complex composed of 2 membrane-embedded substrate-binding proteins (S component), 2 ATP-binding proteins (A component) and 2 transmembrane proteins (T component). May be able to interact with more than 1 S component at a time.

It localises to the cell membrane. Functionally, transmembrane (T) component of an energy-coupling factor (ECF) ABC-transporter complex. Unlike classic ABC transporters this ECF transporter provides the energy necessary to transport a number of different substrates. This chain is Energy-coupling factor transporter transmembrane protein EcfT, found in Heliobacterium modesticaldum (strain ATCC 51547 / Ice1).